A 124-amino-acid chain; its full sequence is Large ribosomal subunit protein bL12 (124 aa).

This sequence belongs to the bacterial ribosomal protein bL12 family. In terms of assembly, homodimer. Part of the ribosomal stalk of the 50S ribosomal subunit. Forms a multimeric L10(L12)X complex, where L10 forms an elongated spine to which 2 to 4 L12 dimers bind in a sequential fashion. Binds GTP-bound translation factors.

Functionally, forms part of the ribosomal stalk which helps the ribosome interact with GTP-bound translation factors. Is thus essential for accurate translation. In Sulfurovum sp. (strain NBC37-1), this protein is Large ribosomal subunit protein bL12.